The sequence spans 808 residues: Probable mannosyl-oligosaccharide glucosidase (808 aa).

Residues methionine 1–arginine 11 are Cytoplasmic-facing. A helical; Signal-anchor for type II membrane protein transmembrane segment spans residues tryptophan 12–valine 31. The Lumenal portion of the chain corresponds to glutamate 32–tyrosine 808. A glycan (N-linked (GlcNAc...) asparagine) is linked at asparagine 39. Aspartate 580 serves as the catalytic Proton donor. Catalysis depends on glutamate 778, which acts as the Proton acceptor.

It belongs to the glycosyl hydrolase 63 family.

It localises to the endoplasmic reticulum membrane. The enzyme catalyses N(4)-(alpha-D-Glc-(1-&gt;2)-alpha-D-Glc-(1-&gt;3)-alpha-D-Glc-(1-&gt;3)-alpha-D-Man-(1-&gt;2)-alpha-D-Man-(1-&gt;2)-alpha-D-Man-(1-&gt;3)-[alpha-D-Man-(1-&gt;2)-alpha-D-Man-(1-&gt;3)-[alpha-D-Man-(1-&gt;2)-alpha-D-Man-(1-&gt;6)]-alpha-D-Man-(1-&gt;6)]-beta-D-Man-(1-&gt;4)-beta-D-GlcNAc-(1-&gt;4)-beta-D-GlcNAc)-L-asparaginyl-[protein] + H2O = N(4)-(alpha-D-Glc-(1-&gt;3)-alpha-D-Glc-(1-&gt;3)-alpha-D-Man-(1-&gt;2)-alpha-D-Man-(1-&gt;2)-alpha-D-Man-(1-&gt;3)-[alpha-D-Man-(1-&gt;2)-alpha-D-Man-(1-&gt;3)-[alpha-D-Man-(1-&gt;2)-alpha-D-Man-(1-&gt;6)]-alpha-D-Man-(1-&gt;6)]-beta-D-Man-(1-&gt;4)-beta-D-GlcNAc-(1-&gt;4)-beta-D-GlcNAc)-L-asparaginyl-[protein] + beta-D-glucose. In terms of biological role, cleaves the distal alpha 1,2-linked glucose residue from the Glc(3)Man(9)GlcNAc(2) oligosaccharide precursor highly specifically. This Schizosaccharomyces pombe (strain 972 / ATCC 24843) (Fission yeast) protein is Probable mannosyl-oligosaccharide glucosidase.